The primary structure comprises 270 residues: Protein-ADP-ribose hydrolase (270 aa).

The region spanning 73-267 (VSVKDCQKTN…LYDTYLQKEN (195 aa)) is the Macro domain. ADP-D-ribose contacts are provided by aspartate 92, isoleucine 93, and asparagine 106. Cysteine 112, histidine 117, and cysteine 119 together coordinate Zn(2+). The ADP-D-ribose site is built by cysteine 119, isoleucine 120, aspartate 121, serine 212, threonine 213, glycine 214, glutamate 215, and phenylalanine 216.

The protein belongs to the MacroD-type family. Zn-Macro subfamily. Zn(2+) is required as a cofactor.

The enzyme catalyses 4-O-(ADP-D-ribosyl)-L-aspartyl-[protein] + H2O = L-aspartyl-[protein] + ADP-D-ribose + H(+). Functionally, ADP-ribosylhydrolase that specifically reverses the SirTM-mediated mono-ADP-ribosylation at an asparatate residue of GcvH-L, by releasing ADP-ribose from the target protein. May play a role in the regulation of the response to host-induced oxidative stress. This Streptococcus pyogenes serotype M1 protein is Protein-ADP-ribose hydrolase.